A 221-amino-acid chain; its full sequence is Thymidylate kinase (221 aa).

12–19 (GIDGAGKS) serves as a coordination point for ATP.

Belongs to the thymidylate kinase family.

The enzyme catalyses dTMP + ATP = dTDP + ADP. In terms of biological role, phosphorylation of dTMP to form dTDP in both de novo and salvage pathways of dTTP synthesis. This is Thymidylate kinase from Paracidovorax citrulli (strain AAC00-1) (Acidovorax citrulli).